Here is a 283-residue protein sequence, read N- to C-terminus: NADPH-dependent 3-dehydrocapnine reductase (283 aa).

Residue Tyr153 is the Proton acceptor of the active site.

Belongs to the short-chain dehydrogenases/reductases (SDR) family.

The enzyme catalyses 3-oxocapnine + NADPH + H(+) = capnine + NADP(+). The protein operates within lipid metabolism. In terms of biological role, reductase involved in the biosynthesis of capnine, a sulfonolipid present in the outer membrane of gliding Bacteroidetes and essential for gliding motility. Catalyzes the reduction of 3-dehydrocapnine to capnine. The protein is NADPH-dependent 3-dehydrocapnine reductase of Ornithobacterium rhinotracheale.